The primary structure comprises 168 residues: Peptide deformylase 1 (168 aa).

Residues cysteine 91 and histidine 133 each coordinate Fe cation. Glutamate 134 is a catalytic residue. Position 137 (histidine 137) interacts with Fe cation.

It belongs to the polypeptide deformylase family. Requires Fe(2+) as cofactor.

The catalysed reaction is N-terminal N-formyl-L-methionyl-[peptide] + H2O = N-terminal L-methionyl-[peptide] + formate. Functionally, removes the formyl group from the N-terminal Met of newly synthesized proteins. Requires at least a dipeptide for an efficient rate of reaction. N-terminal L-methionine is a prerequisite for activity but the enzyme has broad specificity at other positions. The chain is Peptide deformylase 1 from Shewanella oneidensis (strain ATCC 700550 / JCM 31522 / CIP 106686 / LMG 19005 / NCIMB 14063 / MR-1).